A 669-amino-acid polypeptide reads, in one-letter code: UvrABC system protein B (669 aa).

The 158-residue stretch at Thr26–Arg183 folds into the Helicase ATP-binding domain. Residue Gly39–Thr46 coordinates ATP. Positions Tyr92–Ile115 match the Beta-hairpin motif. The Helicase C-terminal domain occupies Gln431–Leu597. The 36-residue stretch at Ala631–Ala666 folds into the UVR domain.

The protein belongs to the UvrB family. In terms of assembly, forms a heterotetramer with UvrA during the search for lesions. Interacts with UvrC in an incision complex.

The protein localises to the cytoplasm. Its function is as follows. The UvrABC repair system catalyzes the recognition and processing of DNA lesions. A damage recognition complex composed of 2 UvrA and 2 UvrB subunits scans DNA for abnormalities. Upon binding of the UvrA(2)B(2) complex to a putative damaged site, the DNA wraps around one UvrB monomer. DNA wrap is dependent on ATP binding by UvrB and probably causes local melting of the DNA helix, facilitating insertion of UvrB beta-hairpin between the DNA strands. Then UvrB probes one DNA strand for the presence of a lesion. If a lesion is found the UvrA subunits dissociate and the UvrB-DNA preincision complex is formed. This complex is subsequently bound by UvrC and the second UvrB is released. If no lesion is found, the DNA wraps around the other UvrB subunit that will check the other stand for damage. The sequence is that of UvrABC system protein B from Xylella fastidiosa (strain M23).